We begin with the raw amino-acid sequence, 208 residues long: Large ribosomal subunit protein uL3 (208 aa).

The disordered stretch occupies residues 134–159; the sequence is SKFHREAGSTGHCTTPGRSFKNTTMP. Residues 144 to 158 are compositionally biased toward polar residues; the sequence is GHCTTPGRSFKNTTM.

Belongs to the universal ribosomal protein uL3 family. As to quaternary structure, part of the 50S ribosomal subunit. Forms a cluster with proteins L14 and L19.

Functionally, one of the primary rRNA binding proteins, it binds directly near the 3'-end of the 23S rRNA, where it nucleates assembly of the 50S subunit. This Treponema denticola (strain ATCC 35405 / DSM 14222 / CIP 103919 / JCM 8153 / KCTC 15104) protein is Large ribosomal subunit protein uL3.